Consider the following 309-residue polypeptide: Taste receptor type 2 member 113 (309 aa).

Residues 1–10 (MVAVLQSTLP) lie on the Extracellular side of the membrane. A helical transmembrane segment spans residues 11–31 (IIFSMEFIMGTLGNGFIFLIV). Over 32-55 (CIDWVQRRKISLVDQIRTALAISR) the chain is Cytoplasmic. A helical transmembrane segment spans residues 56-76 (IALIWLIFLDWWVSVHYPALH). Over 77-80 (ETGK) the chain is Extracellular. Residues 81–101 (MLSTYLISWTVINHCNFWLTA) form a helical membrane-spanning segment. Over 102-127 (NLSILYFLKIANFSNIIFLYLKFRSK) the chain is Cytoplasmic. Residues 128–148 (NVVLVTLLVSLFFLFLNTVII) form a helical membrane-spanning segment. Residues 149–185 (KIFSDVCFDSVQRNVSQIFIMYNHEQICKFLSFTNPM) lie on the Extracellular side of the membrane. An N-linked (GlcNAc...) asparagine glycan is attached at Asn162. The chain crosses the membrane as a helical span at residues 186–206 (FTFIPFVMSTVMFSLLIFSLW). The Cytoplasmic portion of the chain corresponds to 207–229 (RHLKNMQHTAKGCRDISTTVHIR). The chain crosses the membrane as a helical span at residues 230–250 (ALQTIIVSVVLYTIFFLSFFV). Topologically, residues 251 to 262 (KVWSFVSPERYL) are extracellular. Residues 263-283 (IFLFVWALGNAVFSAHPFVMI) traverse the membrane as a helical segment. Residues 284-309 (LVNRRLRLASLSLIFWLWYRFKNIEV) lie on the Cytoplasmic side of the membrane.

This sequence belongs to the G-protein coupled receptor T2R family.

It is found in the membrane. Functionally, putative taste receptor which may play a role in the perception of bitterness. The chain is Taste receptor type 2 member 113 from Mus musculus (Mouse).